The chain runs to 185 residues: Probable nicotinate-nucleotide adenylyltransferase (185 aa).

This sequence belongs to the NadD family.

The enzyme catalyses nicotinate beta-D-ribonucleotide + ATP + H(+) = deamido-NAD(+) + diphosphate. It functions in the pathway cofactor biosynthesis; NAD(+) biosynthesis; deamido-NAD(+) from nicotinate D-ribonucleotide: step 1/1. Catalyzes the reversible adenylation of nicotinate mononucleotide (NaMN) to nicotinic acid adenine dinucleotide (NaAD). This is Probable nicotinate-nucleotide adenylyltransferase from Cereibacter sphaeroides (strain ATCC 17025 / ATH 2.4.3) (Rhodobacter sphaeroides).